The sequence spans 429 residues: Bifunctional protein GlmU (429 aa).

Residues 1 to 223 (MKTSILILAA…EDEFMGINDK (223 aa)) form a pyrophosphorylase region. Residues 8-11 (LAAG), lysine 22, and 81-82 (GT) contribute to the UDP-N-acetyl-alpha-D-glucosamine site. Mg(2+) is bound at residue aspartate 102. UDP-N-acetyl-alpha-D-glucosamine-binding residues include glycine 135, glutamate 149, asparagine 164, and asparagine 221. Asparagine 221 contacts Mg(2+). The interval 224 to 244 (FELSIAENFMQKKIKKYWMQQ) is linker. An N-acetyltransferase region spans residues 245–429 (GVIFHLPQST…KDYYYKKFQK (185 aa)). UDP-N-acetyl-alpha-D-glucosamine contacts are provided by arginine 308 and lysine 325. Histidine 336 functions as the Proton acceptor in the catalytic mechanism. UDP-N-acetyl-alpha-D-glucosamine-binding residues include tyrosine 339 and asparagine 350. Acetyl-CoA-binding positions include 359–360 (NY), serine 378, alanine 396, and arginine 413.

The protein in the N-terminal section; belongs to the N-acetylglucosamine-1-phosphate uridyltransferase family. This sequence in the C-terminal section; belongs to the transferase hexapeptide repeat family. As to quaternary structure, homotrimer. Requires Mg(2+) as cofactor.

It localises to the cytoplasm. The catalysed reaction is alpha-D-glucosamine 1-phosphate + acetyl-CoA = N-acetyl-alpha-D-glucosamine 1-phosphate + CoA + H(+). It carries out the reaction N-acetyl-alpha-D-glucosamine 1-phosphate + UTP + H(+) = UDP-N-acetyl-alpha-D-glucosamine + diphosphate. It functions in the pathway nucleotide-sugar biosynthesis; UDP-N-acetyl-alpha-D-glucosamine biosynthesis; N-acetyl-alpha-D-glucosamine 1-phosphate from alpha-D-glucosamine 6-phosphate (route II): step 2/2. It participates in nucleotide-sugar biosynthesis; UDP-N-acetyl-alpha-D-glucosamine biosynthesis; UDP-N-acetyl-alpha-D-glucosamine from N-acetyl-alpha-D-glucosamine 1-phosphate: step 1/1. The protein operates within bacterial outer membrane biogenesis; LPS lipid A biosynthesis. Catalyzes the last two sequential reactions in the de novo biosynthetic pathway for UDP-N-acetylglucosamine (UDP-GlcNAc). The C-terminal domain catalyzes the transfer of acetyl group from acetyl coenzyme A to glucosamine-1-phosphate (GlcN-1-P) to produce N-acetylglucosamine-1-phosphate (GlcNAc-1-P), which is converted into UDP-GlcNAc by the transfer of uridine 5-monophosphate (from uridine 5-triphosphate), a reaction catalyzed by the N-terminal domain. The polypeptide is Bifunctional protein GlmU (Campylobacter jejuni subsp. jejuni serotype O:2 (strain ATCC 700819 / NCTC 11168)).